The following is a 219-amino-acid chain: MGQKVDPRGLRLGITRAWDSNWYADKKEYVKYFHEDVQIKEFIKKNYFHTGISKVRIERTSPSQVVVHIHTGKAGLIIGRKGAEIDALRAKLEKLTGKKVTVKVQEIKDLNGDAVLVAESIAAQIEKRIAYKKAMTQAISRSMKSPEVKGIKVMISGRLNGAEIARSEWAVEGKVPLHTLRADIDYAVATAHTTYGALGIKVWIFHGEVLPSKKEGGEA.

Residues 39–108 form the KH type-2 domain; the sequence is IKEFIKKNYF…KVTVKVQEIK (70 aa).

It belongs to the universal ribosomal protein uS3 family. Part of the 30S ribosomal subunit. Forms a tight complex with proteins S10 and S14.

Its function is as follows. Binds the lower part of the 30S subunit head. Binds mRNA in the 70S ribosome, positioning it for translation. This Fusobacterium nucleatum subsp. nucleatum (strain ATCC 25586 / DSM 15643 / BCRC 10681 / CIP 101130 / JCM 8532 / KCTC 2640 / LMG 13131 / VPI 4355) protein is Small ribosomal subunit protein uS3.